The sequence spans 384 residues: 1-deoxy-D-xylulose 5-phosphate reductoisomerase (384 aa).

6 residues coordinate NADPH: Thr10, Gly11, Ser12, Ile13, Lys37, and Asn124. Lys125 serves as a coordination point for 1-deoxy-D-xylulose 5-phosphate. Glu126 serves as a coordination point for NADPH. Asp150 lines the Mn(2+) pocket. The 1-deoxy-D-xylulose 5-phosphate site is built by Ser151, Glu152, Ser176, and His199. Position 152 (Glu152) interacts with Mn(2+). Gly205 lines the NADPH pocket. Positions 212, 217, 218, and 221 each coordinate 1-deoxy-D-xylulose 5-phosphate. Glu221 serves as a coordination point for Mn(2+).

It belongs to the DXR family. The cofactor is Mg(2+). Requires Mn(2+) as cofactor.

It catalyses the reaction 2-C-methyl-D-erythritol 4-phosphate + NADP(+) = 1-deoxy-D-xylulose 5-phosphate + NADPH + H(+). It functions in the pathway isoprenoid biosynthesis; isopentenyl diphosphate biosynthesis via DXP pathway; isopentenyl diphosphate from 1-deoxy-D-xylulose 5-phosphate: step 1/6. Catalyzes the NADPH-dependent rearrangement and reduction of 1-deoxy-D-xylulose-5-phosphate (DXP) to 2-C-methyl-D-erythritol 4-phosphate (MEP). The protein is 1-deoxy-D-xylulose 5-phosphate reductoisomerase of Clostridium tetani (strain Massachusetts / E88).